Consider the following 99-residue polypeptide: Small ribosomal subunit protein bS20 (99 aa).

It belongs to the bacterial ribosomal protein bS20 family.

Binds directly to 16S ribosomal RNA. The protein is Small ribosomal subunit protein bS20 of Synechococcus sp. (strain CC9311).